Reading from the N-terminus, the 840-residue chain is Lysine-specific demethylase JMJ27 (840 aa).

A compositionally biased stretch (basic residues) spans 1–10 (MEKMRGKRIR). Residues 1-52 (MEKMRGKRIRPRDSGELVEDGRSESERKTRKKENDVVSKGRIGRGRGRGEVS) are disordered. A compositionally biased stretch (basic and acidic residues) spans 11–38 (PRDSGELVEDGRSESERKTRKKENDVVS). Cys-80, Cys-83, Cys-95, Cys-98, Cys-104, Cys-107, Cys-124, and Cys-127 together coordinate Zn(2+). The RING-type; degenerate zinc-finger motif lies at 80-127 (CHHCKILTSESDLIFCSKCNKKCYCFDCIKRSYSERTHEEVRAACPFC). Residues 502–798 (PKSGILNLAT…ECLRLTQEFR (297 aa)) enclose the JmjC domain. Positions 546 and 548 each coordinate Fe cation. The tract at residues 594-678 (KEASELENKS…ETDGNTNERS (85 aa)) is disordered. Residues 595–620 (EASELENKSMKEVDESKKDLKDKAAN) show a composition bias toward basic and acidic residues. Residues 621 to 631 (EEQSNNSSRPS) show a composition bias toward polar residues. Over residues 635–646 (EAEKVIISKEDN) the composition is skewed to basic and acidic residues. Over residues 647 to 659 (PTQPAVSTSVESI) the composition is skewed to polar residues. Residues 660–678 (QEQKLDAPKETDGNTNERS) show a composition bias toward basic and acidic residues. His-766 serves as a coordination point for Fe cation.

This sequence belongs to the JARID1 histone demethylase family. Interacts with RPN1A. Fe(2+) serves as cofactor. In terms of tissue distribution, expressed in seedlings, inflorescences, flowers and siliques, and, at low levels, in roots, leaves (including vascular bundles) and stems. Particularly observed in stomatal guard cells.

The protein resides in the nucleus. The protein localises to the cytoplasm. The enzyme catalyses N(6),N(6)-dimethyl-L-lysyl(9)-[histone H3] + 2-oxoglutarate + O2 = N(6)-methyl-L-lysyl(9)-[histone H3] + formaldehyde + succinate + CO2. It catalyses the reaction N(6)-methyl-L-lysyl(9)-[histone H3] + 2-oxoglutarate + O2 = L-lysyl(9)-[histone H3] + formaldehyde + succinate + CO2. The catalysed reaction is N(6),N(6)-dimethyl-L-lysyl(9)-[histone H3] + 2 2-oxoglutarate + 2 O2 = L-lysyl(9)-[histone H3] + 2 formaldehyde + 2 succinate + 2 CO2. Functionally, histone demethylase that demethylates 'Lys-9' (H3K9me) of histone H3 with a specific activity for H3K9me1 and H3K9me2. No activity on H3K4, H3K27, H3K36, H3R2 and H4R3 methyl marks, but weak activity on H3K9me3. Involved in regulation of gene expression. Regulates flowering time by repressing the major flowering regulator CONSTANS (CO) and promoting FLOWERING LOCUS C (FLC). Exhibits a positive impact on abscisic acid- (ABA), hydrogen peroxide- (H(2)O(2)) and calcium- (Ca(2+)) induced stomatal closure. Promotes stomatal-closure-dependent drought-stress responses through its histone demethylase activity toward at least GOLS2 and RD20 loci, thus protecting them from silencing by removing H3K9me2 marks in drought conditions. Required for plant defenses leading to resistance against the virulent bacterial pathogen Pseudomonas syringae pv. tomato DC3000 (Pst DC3000) via a negative regulation of WRKY25 (a repressor of defense) and by triggering the expression of several pathogenesis-related (PR) proteins (e.g. PR1, PR3, PR4 and PR5). This chain is Lysine-specific demethylase JMJ27, found in Arabidopsis thaliana (Mouse-ear cress).